The following is a 242-amino-acid chain: RNA transcription, translation and transport factor protein (242 aa).

The protein belongs to the RTRAF family. As to quaternary structure, homodimer. Component of a tRNA-splicing ligase complex.

The protein localises to the nucleus. It localises to the cytoplasm. Its subcellular location is the cytosol. The protein resides in the perinuclear region. It is found in the cytoskeleton. The protein localises to the microtubule organizing center. It localises to the centrosome. Its function is as follows. RNA-binding protein involved in modulation of mRNA transcription by Polymerase II. Component of the tRNA-splicing ligase complex. The chain is RNA transcription, translation and transport factor protein from Danio rerio (Zebrafish).